The chain runs to 18141 residues: Titin (18141 aa).

Residues 1-31 (MQRQNPNPYQQQNQQHQQVQQFSSQEYSHSS) are compositionally biased toward low complexity. Residues 1-69 (MQRQNPNPYQ…QHHGGSIGGA (69 aa)) form a disordered region. Basic and acidic residues predominate over residues 32 to 47 (QEQHQEQRISRTEQHV). A compositionally biased stretch (low complexity) spans 48–62 (QRSQVTTQRQVQQHH). 17 consecutive Ig-like domains span residues 86–177 (PPVF…VYIQ), 255–343 (PQIS…AVLA), 372–461 (PAFV…AQLN), 471–559 (PQFV…ARLY), 618–708 (PQFI…AILS), 751–842 (PQFI…SSIR), 890–981 (PQFK…AQLT), 1024–1115 (PRFL…ATMI), 1158–1249 (PVFV…ACVR), 1291–1381 (PQFT…CSVR), 1424–1515 (PRFL…VELQ), 1558–1643 (PVFT…EAIT), 1691–1781 (PVFT…ASLI), 1824–1917 (PVFV…LNVT), 1958–2050 (PQFG…VNVT), 2089–2180 (PIFL…CNVR), and 2222–2313 (PHFT…TNLR). The tract at residues 236–266 (EQDSQLSQELDRNQGPAQAPQISQKPRSSKL) is disordered. Residues cysteine 393 and cysteine 445 are joined by a disulfide bond. 3 cysteine pairs are disulfide-bonded: cysteine 1312/cysteine 1365, cysteine 1446/cysteine 1499, and cysteine 1579/cysteine 1632. A disulfide bond links cysteine 1846 and cysteine 1899. Cysteine 2111 and cysteine 2164 form a disulfide bridge. The span at 2338–2347 (STAPHQRQEP) shows a compositional bias: basic and acidic residues. Positions 2338–2357 (STAPHQRQEPETPGTRQRPV) are disordered. Ig-like domains lie at 2356 to 2449 (PVFT…MRVV), 2488 to 2581 (PIFT…MKVK), and 2622 to 2715 (PVFT…LKIE). The interval 2731 to 2750 (PRIGELEAPKEGRPEAPEPT) is disordered. Over residues 2734-2746 (GELEAPKEGRPEA) the composition is skewed to basic and acidic residues. 9 Ig-like domains span residues 2754-2844 (PVFI…GTLK), 2891-2983 (PPVW…TTIF), 3029-3116 (PRFT…AEIS), 3130-3221 (PRFT…TTLN), 3263-3354 (PKFI…ASLK), 3401-3494 (PVFT…MKIQ), 3539-3625 (PEFI…ATVS), 3676-3767 (PKFT…AKVT), and 3811-3901 (PKFT…ATVS). An intrachain disulfide couples cysteine 2775 to cysteine 2828. Cysteines 3152 and 3205 form a disulfide. Intrachain disulfides connect cysteine 3560-cysteine 3613, cysteine 3698-cysteine 3751, and cysteine 3832-cysteine 3885. The stretch at 3910–3944 (LQNQVPRGMKRSDALTQMEATIKKYTSEVHLTEDD) is one TPR 1 repeat. Ig-like domains are found at residues 3954 to 4047 (PRFV…IKVS) and 4092 to 4181 (PVFV…LKVV). A disulfide bridge connects residues cysteine 3976 and cysteine 4029. A coiled-coil region spans residues 4204–4229 (AAYQKERQENELEKVFDERKQVLSEQ). Disordered stretches follow at residues 4226–4254 (LSEQSSHTLKGVEHLKPKQYKPPTPDWQQ) and 4299–4336 (SSQAKGMAQSYEENLQEKTSTTEVQAAPPKGIAQPSES). Positions 4309-4322 (YEENLQEKTSTTEV) are enriched in polar residues. Ig-like domains lie at 4394 to 4482 (PVFT…ANLV), 4497 to 4585 (PSFV…GDCI), 4604 to 4692 (PHIV…AQLK), and 4703 to 4791 (PTIT…AKLT). A TPR 2 repeat occupies 4403-4438 (CRVFENEQAKFEVEFEGEPNPTVKWYRESFPIQNSP). Cysteine 4625 and cysteine 4676 are joined by a disulfide. Disordered regions lie at residues 4803–4891 (RTID…DKGV), 5318–5368 (DELV…QPEP), 5413–5648 (RVIP…EVDA), 5667–5701 (IKKTKRPKSTKEVTEELFEEQPEEEISPEEEVPQK), 5718–5748 (KKTKKPKLTQQVTEEETPHEEIIKESEEVVQ), 5775–5982 (KEEE…QRLL), 6034–6350 (KRVK…MPVD), and 6364–6393 (EEEVVPTEETPEAKQKAHKKRTKRLKEASV). Over residues 4822 to 4841 (PESPHAFQPGQQPGQQFGQF) the composition is skewed to low complexity. Over residues 4852–4863 (GRSRQKKPKVRS) the composition is skewed to basic residues. Composition is skewed to basic and acidic residues over residues 5344 to 5357 (QPQEKTFEEAHDEL), 5436 to 5447 (RPKEAVKAEEIQ), 5541 to 5552 (QKPDEQKQELPK), 5591 to 5621 (IEEKLDVAPTKTYEKAVDVLPDEPKVEEKPE), and 5633 to 5645 (PKSEPTEEVHPDE). A TPR 3 repeat occupies 5575–5613 (PVLWERKKKKPQPQDVIEEKLDVAPTKTYEKAVDVLPDE). Acidic residues predominate over residues 5681–5697 (EELFEEQPEEEISPEEE). 2 stretches are compositionally biased toward acidic residues: residues 5779 to 5792 (IPTEETVEEEETAE) and 5818 to 5860 (DVEE…QDEI). Residues 5865–5874 (RKVKKAKKPK) are compositionally biased toward basic residues. The segment covering 5883 to 5904 (EIEEDQPEEEVLQEEIIGEQEE) has biased composition (acidic residues). A compositionally biased stretch (basic residues) spans 5910-5920 (RKVKSIKKPKK). Residues 5921-5971 (VVTEKTVDQTEQPEKPEESQAEEVKETVTEEPKKPKPAPEEAKVEQVEKIS) show a composition bias toward basic and acidic residues. Over residues 6034–6043 (KRVKKKKPKT) the composition is skewed to basic residues. Positions 6049–6079 (ESTEEPAEETEEFEEEATQPEEVQPVEEIPE) are enriched in acidic residues. 6 stretches are compositionally biased toward basic and acidic residues: residues 6081–6092 (PQVKEVADERKT), 6099–6133 (RKEEIIEKVEEVALKRVTRPKKELPQEATIEEVRL), 6141–6169 (IKPEEVKLEEVDLQHVEKKEDEIVQEEKR), 6195–6209 (EAEHIELEKQPKPEE), 6217–6234 (KRGEKKQPVEEVLEEKKW), and 6259–6268 (PIEEQQKPEK). Residues 6281 to 6290 (PESEEEELEL) show a composition bias toward acidic residues. Positions 6291 to 6306 (EPLKLPEDKKPKEPKA) are enriched in basic and acidic residues. The span at 6307–6318 (KKEKKKKPKLKK) shows a compositional bias: basic residues. Composition is skewed to acidic residues over residues 6325-6349 (EVSEEVAEPFDEPIAEEDEVEEMPV) and 6364-6373 (EEEVVPTEET). Ig-like domains follow at residues 6536 to 6624 (PRIT…TNII), 6633 to 6728 (PQFT…NILS), 6741 to 6830 (PTVT…VVVS), 6841 to 6929 (PRFI…ATVN), 6942 to 7034 (PRFV…VKIQ), 7066 to 7151 (PKII…VAVT), and 7189 to 7279 (PSLL…FDIS). Residues cysteine 6557 and cysteine 6608 are joined by a disulfide bond. A disulfide bridge links cysteine 6964 with cysteine 7016. The stretch at 7621 to 7663 (KIQVQTKQIAQMNTKIKKHKKHKQQEQEVSETTIQCEQKETLA) forms a coiled coil. Disordered regions lie at residues 7773–7793 (AKTAESSKELPSKIPKSVKAQ), 9414–9440 (EEDDKQPETTVTVEEVPYEEEKPEEIQ), 9485–9510 (EEDDKQPETTVTVEEVPYEEEKPEEI), 9556–9582 (EEDDKQPETTVTVEEVPYEEEKPEEIQ), 9627–9652 (EEDDKQPETTVTVEEVPYEEEKPEEI), 9698–9724 (EEDDKQPETTVTVEEVPYEEEKPEEIQ), 9769–9796 (EEDDKQPETTVTVEEVPYEEEKPEEIQE), 9838–9865 (TAEEDDKQPETTVTVEEVPYEEEKPEEI), 9911–9937 (EEDDKQPETTVTVEEVPYEEEKPEEIQ), 9982–10008 (EEDDKQPETTVTVEEVPYEEEKPEEIQ), 10053–10080 (EEDDKQPETTVTVEEVPYEEEKPEEIQE), 10125–10149 (ENDKQPETTVTVEEVPYEEEKPEEI), 10195–10220 (EEDDKQPKTTVTVEEVPYEEEKPEEI), 10266–10291 (EEDDKQPETTVTVEEVPYEEEKPEEI), 10337–10364 (EEDDKQPETTVTVEEVPYEEEKPEEIQE), 10408–10433 (EEDDKQPETTVTVEEVPYEEEKPEEI), 10479–10504 (EEDDKQPETTVTVEEVPYEEEKPEEI), 10550–10576 (EEDDKQPETTVTVEEVPYEEEKPEEIQ), 10621–10648 (EEDDKQPETTVTVEEVPYEEEKPEEIQE), 10692–10717 (EEDDKQPETTVTVEEVPYEEEKPEEI), 10763–10788 (EEDDKQPETTVTVEEVPYEEEKPEEI), 10834–10860 (EEDDKQPETTVTVEEVPYEEEKPEEIQ), 10905–10932 (EEDDKQPETTVTVEEVPYEEEKPEEIQE), 11047–11073 (EEDDKQPETTVTVEEVPYEEEKPEEIQ), 11118–11143 (EEDDKQPETTVTVEEVPYEEEKPEEI), 11189–11216 (EEDDKQPETTVTVEEVPYEEEKPEEIQE), 11260–11286 (EEDDKQPETTVTVEEVPYEEEKPEEIQ), 11679–11703 (EELDENKKPKKKTTKTRTFKKRGPD), and 11767–11795 (TEPEEASADALQKPTKDKTPKQKKTLETP). Residues 7774–7783 (KTAESSKELP) are compositionally biased toward basic and acidic residues. Composition is skewed to acidic residues over residues 9429-9440 (VPYEEEKPEEIQ), 9500-9510 (VPYEEEKPEEI), 9571-9582 (VPYEEEKPEEIQ), 9642-9652 (VPYEEEKPEEI), 9713-9724 (VPYEEEKPEEIQ), 9784-9796 (VPYEEEKPEEIQE), 9855-9865 (VPYEEEKPEEI), 9926-9937 (VPYEEEKPEEIQ), 9997-10008 (VPYEEEKPEEIQ), 10068-10080 (VPYEEEKPEEIQE), 10139-10149 (VPYEEEKPEEI), 10210-10220 (VPYEEEKPEEI), 10281-10291 (VPYEEEKPEEI), 10352-10364 (VPYEEEKPEEIQE), 10423-10433 (VPYEEEKPEEI), 10494-10504 (VPYEEEKPEEI), 10565-10576 (VPYEEEKPEEIQ), 10636-10648 (VPYEEEKPEEIQE), 10707-10717 (VPYEEEKPEEI), 10778-10788 (VPYEEEKPEEI), 10849-10860 (VPYEEEKPEEIQ), 10920-10932 (VPYEEEKPEEIQE), 11062-11073 (VPYEEEKPEEIQ), 11133-11143 (VPYEEEKPEEI), 11204-11216 (VPYEEEKPEEIQE), and 11275-11286 (VPYEEEKPEEIQ). Basic residues predominate over residues 11686 to 11699 (KPKKKTTKTRTFKK). A compositionally biased stretch (basic and acidic residues) spans 11780–11792 (PTKDKTPKQKKTL). Residues 11872 to 11905 (KTVLQPYQRTEMELPQRARRDSSFKQPVKLTPMK) form a TPR 4 repeat. Disordered regions lie at residues 12003–12201 (FKHS…ADTK), 12451–12471 (TLQVGVTEHEPTKKLKTKKPE), 12685–12767 (TVDD…LPGP), 12943–12971 (IDHENAEEAPKVLKSKVSEEKPKSKKEKS), 13131–13154 (IKKKKVSPKHGPKEQVFEITETRP), 13325–13349 (QSFESPEPTEGEAHETKTKTKKPKK), 13471–13492 (EEYEPTEMDSKKKPKKKVKSHN), 13554–13576 (EADKPIKQPTQDQPIKKEKPLKK), 13702–13792 (KVQK…KSPD), 13891–13914 (EEVQEKSKEAPEEKKAKTVRKAKK), 13951–13994 (MKRK…DEPK), 14073–14094 (TTVPTETPDQDQPSVKQKRTKK), 14109–14322 (EEEA…QVTT), 14354–14377 (EYEPEPVNQDEKPKEPKKKTRKVK), 14414–14448 (PLDSPIDVLDESPKEVQKKDKKSRSTKVPNEETPV), 14533–14566 (EPEIASPQSIEEHPEQSKEKLAPKPKKTVRKVKK), 14583–14720 (KVDL…SELP), and 14756–14789 (VEESQPIVEEVEDEEPQPATEETVEDVTKPKSKK). Basic and acidic residues-rich tracts occupy residues 12022 to 12035 (ESDHSDKSNKELLH), 12044 to 12054 (EKIETPDESRK), 12124 to 12134 (MERTSDIREES), 12183 to 12201 (LNLRKRQGERPDDDKADTK), 12457 to 12471 (TEHEPTKKLKTKKPE), and 12685 to 12709 (TVDDVRVPKDKKKKIDNQKKIKISE). A compositionally biased stretch (acidic residues) spans 12731–12741 (HDEDLQTDEYS). Residues 12750–12760 (KSKKKSTKKQK) show a composition bias toward basic residues. Residues 13141–13154 (GPKEQVFEITETRP) show a composition bias toward basic and acidic residues. Residues 13482 to 13492 (KKPKKKVKSHN) show a composition bias toward basic residues. The TPR 5 repeat unit spans residues 13566 to 13599 (QPIKKEKPLKKKKDVEYPVSLEAFDHTVKVVSEP). A compositionally biased stretch (basic and acidic residues) spans 13733–13747 (LVKEDLDQPIERALE). Basic residues predominate over residues 13771–13781 (PKPKKISKPKS). Basic and acidic residues-rich tracts occupy residues 13893–13906 (VQEKSKEAPEEKKA) and 13975–13984 (EDKPVEKISE). Positions 14221–14240 (TVEKPLEALHTDSDLEKPDV) are enriched in basic and acidic residues. Positions 14264-14274 (KISSEQPKQPS) are enriched in low complexity. A compositionally biased stretch (basic and acidic residues) spans 14282 to 14294 (VTEHDLKPEEEKP). Residues 14542–14554 (IEEHPEQSKEKLA) are compositionally biased toward basic and acidic residues. A compositionally biased stretch (basic residues) spans 14555-14564 (PKPKKTVRKV). Residues 14583-14599 (KVDLEKYEKVEMPEKPV) show a composition bias toward basic and acidic residues. Residues 14652–14662 (ETTVDTTDIPE) are compositionally biased toward low complexity. The segment covering 14664–14683 (TPTQTAQPEDTATAQITPSA) has biased composition (polar residues). Residues 14684 to 14697 (QEEKSTQDDTKDTI) are compositionally biased toward basic and acidic residues. Acidic residues predominate over residues 14756 to 14771 (VEESQPIVEEVEDEEP). Residues 14904 to 14936 (IPKTTDIGAIKDNGELSRNIEEAEEILKFKPHK) form a TPR 6 repeat. Disordered regions lie at residues 14956–15208 (EKYI…VSVK), 15301–15329 (TRKKKPKPQQPEEFEVTLKEPKEEQIQPD), 15425–15448 (ISETQSIEEKPIEVAEEAPEETPK), 15578–15597 (IRVSESEPKPEEPSVEQFTV), 15697–15722 (EKPAEAIVEEEEPVVTEPIEEAPKPE), 15825–15876 (EEPK…VEEP), 15951–15973 (ESQPEAVEDKEVSLPKKKPKAPI), and 16181–16206 (QEEEYEEGEDIEEFVVSQQRKPKPLQ). 10 stretches are compositionally biased toward basic and acidic residues: residues 14967 to 14989 (EKTPYKKPEKAPKPEEKQEDVKL), 15024 to 15046 (ELKQKPKEVEIVEEQTKKPKDGE), 15069 to 15080 (QIEHPEIPEKVK), 15088 to 15097 (KPKDKSKSEP), 15109 to 15139 (PKEEEAIPEQDVKFRKPERDAPEETDSEIKL), 15169 to 15179 (IEDKAIDDEKK), 15189 to 15198 (QPKEQEIAKE), 15316 to 15325 (VTLKEPKEEQ), 15425 to 15437 (ISETQSIEEKPIE), and 15578 to 15589 (IRVSESEPKPEE). Residues 15703–15716 (IVEEEEPVVTEPIE) are compositionally biased toward acidic residues. The segment covering 15951–15964 (ESQPEAVEDKEVSL) has biased composition (basic and acidic residues). Residues 16183–16193 (EEYEEGEDIEE) are compositionally biased toward acidic residues. The region spanning 16409–16470 (ENLNIMYSIC…PAQYLMEPEE (62 aa)) is the SH3 domain. Ig-like domains are found at residues 16501–16590 (PRFI…TELI), 16625–16719 (PTFS…ITLK), 16728–16811 (PQIL…ANLT), 16822–16916 (PPLF…VEVD), 16919–17001 (TFTK…STVE), 17007–17091 (PDFI…CELV), 17097–17180 (PEIV…AKLT), 17184–17270 (PLVD…TKLC), and 17277–17363 (PPVI…AEAS). A disulfide bridge links cysteine 16940 with cysteine 16989. In terms of domain architecture, Fibronectin type-III 1 spans 17374–17467 (APGTPQPLEI…LSPPIRLVPK (94 aa)). Ig-like domains lie at 17473-17558 (PSVQ…CRLK) and 17563-17653 (PVLE…CTVQ). Cysteine 17494 and cysteine 17542 are disulfide-bonded. 4 Fibronectin type-III domains span residues 17660–17755 (RPQS…TKKF), 17760–17861 (PPRG…TPPS), 17862–17958 (PPQN…THAS), and 17982–18078 (PPTG…AMTA). Residues 17694 to 17728 (LEKCDVQNNVWMKVSDFNKDIKSYAVQKLSMNAQY) form a TPR 7 repeat. Residues 17741-17771 (SEPTESDPVTITKKFEKPSPPRGPTTVSGMN) are disordered.

This sequence belongs to the protein kinase superfamily. CAMK Ser/Thr protein kinase family. As to quaternary structure, interacts with Msp300; this interaction mediates the recruitment of Msp300 to the Z-disks. In terms of tissue distribution, expressed in the mesoderm at stage 11, several hours before myoblast fusion, and persists in most muscle cells, somatic, visceral and pharyngeal muscles and their precursors, until the third instar. Isoform A: Expressed in the indirect flight muscle (at protein level).

The protein localises to the cytoplasm. Its subcellular location is the nucleus. The protein resides in the chromosome. It is found in the myofibril. It localises to the sarcomere. The protein localises to the z line. Key component in the assembly and functioning of adult and embryonic striated muscles and muscle tendons. By providing connections at the level of individual microfilaments, it contributes to the fine balance of forces between the two halves of the sarcomere. The size and extensibility of the cross-links are the main determinants of sarcomere extensibility properties of muscle. In non-muscle cells, seems to play a role in chromosome condensation and chromosome segregation during mitosis. Might link the lamina network to chromatin or nuclear actin, or both during interphase. The sequence is that of Titin (sls) from Drosophila melanogaster (Fruit fly).